The following is a 567-amino-acid chain: Urease subunit alpha (567 aa).

The region spanning 129–567 (GGIDVHVHFI…VPMSQRYFLF (439 aa)) is the Urease domain. Positions 134, 136, and 217 each coordinate Ni(2+). Position 217 is an N6-carboxylysine (Lys217). Position 219 (His219) interacts with substrate. The Ni(2+) site is built by His246 and His272. Residue His320 is the Proton donor of the active site. Asp360 contributes to the Ni(2+) binding site.

Belongs to the metallo-dependent hydrolases superfamily. Urease alpha subunit family. Heterotrimer of UreA (gamma), UreB (beta) and UreC (alpha) subunits. Three heterotrimers associate to form the active enzyme. The cofactor is Ni cation. Post-translationally, carboxylation allows a single lysine to coordinate two nickel ions.

Its subcellular location is the cytoplasm. It carries out the reaction urea + 2 H2O + H(+) = hydrogencarbonate + 2 NH4(+). It functions in the pathway nitrogen metabolism; urea degradation; CO(2) and NH(3) from urea (urease route): step 1/1. The polypeptide is Urease subunit alpha (Blochmanniella floridana).